Reading from the N-terminus, the 2378-residue chain is Dimodular nonribosomal peptide synthase (2378 aa).

Carrier domains follow at residues alanine 961 to glutamine 1036 and glycine 2036 to serine 2111. An O-(pantetheine 4'-phosphoryl)serine mark is found at serine 996 and serine 2071.

Belongs to the ATP-dependent AMP-binding enzyme family. Pantetheine 4'-phosphate serves as cofactor.

The catalysed reaction is holo-[peptidyl-carrier protein] + L-threonine + ATP = L-threonyl-[peptidyl-carrier protein] + AMP + diphosphate. It carries out the reaction holo-[peptidyl-carrier protein] + glycine + ATP = glycyl-[peptidyl-carrier protein] + AMP + diphosphate. It participates in siderophore biosynthesis; bacillibactin biosynthesis. Its function is as follows. Specifically adenylates L-threonine and, to a lesser extent, glycine and covalently loads both amino acids onto their corresponding peptidyl carrier domains. This Bacillus subtilis (strain 168) protein is Dimodular nonribosomal peptide synthase (dhbF).